The chain runs to 559 residues: Germacrene A synthase 1 (559 aa).

Mg(2+) is bound by residues aspartate 312, aspartate 316, aspartate 456, threonine 460, and glutamate 464. The DDXXD motif signature appears at 312–316 (DDTYD).

Belongs to the terpene synthase family. Monomer. Mg(2+) is required as a cofactor. As to expression, mainly expressed in sunflower trichomes.

The catalysed reaction is (2E,6E)-farnesyl diphosphate = (+)-(R)-germacrene A + diphosphate. It functions in the pathway secondary metabolite biosynthesis; terpenoid biosynthesis. In terms of biological role, sesquiterpene synthase involved in germacrene A biosynthesis. Germacrene A is a precursor of several sesquiterpene lactones. The polypeptide is Germacrene A synthase 1 (Helianthus annuus (Common sunflower)).